The chain runs to 215 residues: Small ribosomal subunit protein uS3c (215 aa).

The 74-residue stretch at 43-116 (IKNYIKKNMK…KLNMAITRIA (74 aa)) folds into the KH type-2 domain.

The protein belongs to the universal ribosomal protein uS3 family. Part of the 30S ribosomal subunit.

The protein resides in the plastid. Its subcellular location is the chloroplast. The protein is Small ribosomal subunit protein uS3c (rps3) of Morus indica (Mulberry).